The chain runs to 96 residues: MKCFAQIVVLLLVIAFSHGAVITGVCDRDAQCGSGTCCAASAFSRNIRFCVPLGNNGEECHPASHKVPYNGKRLSSLCPCNTGLTCSKSGEKSQCS.

A signal peptide spans 1–19 (MKCFAQIVVLLLVIAFSHG). 5 disulfides stabilise this stretch: C26-C38, C32-C50, C37-C78, C60-C86, and C80-C95.

This sequence belongs to the AVIT (prokineticin) family. In terms of tissue distribution, expressed by the skin glands.

The protein localises to the secreted. In terms of biological role, potent agonist for both PKR1/PROKR1 and PKR2/PROKR2, and inducer of a potent and long-lasting hyperalgesia. Also potentiates capsaicin-induced TRPV1 current, when tested on DRG neurons. At subnanomolar concentrations, this protein both induces potent chemotaxis of macrophages and stimulates LPS-induced production of the pro-inflammatory cytokines IL-1 and IL-12. In vivo, potently stimulates the contraction of the guinea-pig gastrointestinal (GI) smooth muscle (nanomolar concentration). This is Prokineticin Bm8-d from Bombina maxima (Giant fire-bellied toad).